The sequence spans 114 residues: Large ribosomal subunit protein bL19 (114 aa).

Belongs to the bacterial ribosomal protein bL19 family.

This protein is located at the 30S-50S ribosomal subunit interface and may play a role in the structure and function of the aminoacyl-tRNA binding site. The chain is Large ribosomal subunit protein bL19 from Halalkalibacterium halodurans (strain ATCC BAA-125 / DSM 18197 / FERM 7344 / JCM 9153 / C-125) (Bacillus halodurans).